A 21-amino-acid polypeptide reads, in one-letter code: AEYDVSDADIEAFYQXXTMTW.

Its function is as follows. Possible mediator for cell division in the blooming process. The protein is Preblooming protein 2 of Prorocentrum triestinum (Red tide alga).